The following is a 74-amino-acid chain: Sec-independent protein translocase protein TatA (74 aa).

The chain crosses the membrane as a helical span at residues 1-21 (MGGISIWQLLIIVAIIVLLFG). Positions 51–74 (ANFDKVEAKESTSTTEKTKEKEQA) are disordered.

It belongs to the TatA/E family. In terms of assembly, the Tat system comprises two distinct complexes: a TatABC complex, containing multiple copies of TatA, TatB and TatC subunits, and a separate TatA complex, containing only TatA subunits. Substrates initially bind to the TatABC complex, which probably triggers association of the separate TatA complex to form the active translocon.

It is found in the cell inner membrane. Part of the twin-arginine translocation (Tat) system that transports large folded proteins containing a characteristic twin-arginine motif in their signal peptide across membranes. TatA could form the protein-conducting channel of the Tat system. The polypeptide is Sec-independent protein translocase protein TatA (Haemophilus ducreyi (strain 35000HP / ATCC 700724)).